A 439-amino-acid polypeptide reads, in one-letter code: Chromosomal replication initiator protein DnaA (439 aa).

The domain I, interacts with DnaA modulators stretch occupies residues 1 to 72 (MEQFSAFKLL…SKLYDDIRAV (72 aa)). The domain II stretch occupies residues 72 to 99 (VRFVNEQDFFINLAKLEEDNRETLYQSS). The tract at residues 100–322 (GLSKNFTFKN…GIATKLLFYV (223 aa)) is domain III, AAA+ region. Residues glycine 144, glycine 146, lysine 147, and threonine 148 each coordinate ATP. Residues 323-439 (KTTKQNLINN…LQDIITSLVI (117 aa)) form a domain IV, binds dsDNA region.

Belongs to the DnaA family. Oligomerizes as a right-handed, spiral filament on DNA at oriC.

Its subcellular location is the cytoplasm. In terms of biological role, plays an essential role in the initiation and regulation of chromosomal replication. ATP-DnaA binds to the origin of replication (oriC) to initiate formation of the DNA replication initiation complex once per cell cycle. Binds the DnaA box (a 9 base pair repeat at the origin) and separates the double-stranded (ds)DNA. Forms a right-handed helical filament on oriC DNA; dsDNA binds to the exterior of the filament while single-stranded (ss)DNA is stabiized in the filament's interior. The ATP-DnaA-oriC complex binds and stabilizes one strand of the AT-rich DNA unwinding element (DUE), permitting loading of DNA polymerase. After initiation quickly degrades to an ADP-DnaA complex that is not apt for DNA replication. Binds acidic phospholipids. This Mycoplasma pneumoniae (strain ATCC 29342 / M129 / Subtype 1) (Mycoplasmoides pneumoniae) protein is Chromosomal replication initiator protein DnaA.